The chain runs to 240 residues: Mitochondrial transcription rescue factor 1 (240 aa).

Residues methionine 1–leucine 83 constitute a mitochondrion transit peptide. The tract at residues serine 92 to glycine 127 is disordered. Acidic residues predominate over residues alanine 101 to serine 124. A phosphoserine mark is found at serine 106 and serine 116. An S4 RNA-binding domain is found at phenylalanine 142–glutamate 217.

As to quaternary structure, monomer. Interacts with POLRMT. Interacts (via S4 domain) with MTRFR (via C-terminus). Associates with mitoribosomal S39 large subunit, peptidyl tRNA and nascent chain.

It is found in the mitochondrion matrix. Its function is as follows. Mitochondrial RNA-binding protein involved in mitochondrial transcription regulation. Functions as a protective factor to maintain proper mitochondrial RNA level during stress. Acts at the transcription level and its protective function depends on its RNA binding ability. Part of a mitoribosome-associated quality control pathway that prevents aberrant translation by responding to interruptions during elongation. As heterodimer with MTRF, ejects the unfinished nascent chain and peptidyl transfer RNA (tRNA), respectively, from stalled ribosomes. Recruitment of mitoribosome biogenesis factors to these quality control intermediates suggests additional roles for MTRES1 and MTRF during mitoribosome rescue. The protein is Mitochondrial transcription rescue factor 1 (Mtres1) of Mus musculus (Mouse).